The primary structure comprises 658 residues: NADPH-dependent diflavin oxidoreductase 1 (658 aa).

The 145-residue stretch at Leu16–Trp160 folds into the Flavodoxin-like domain. Residues Thr22–Ser27, Ser69–Gly72, Leu107–Cys116, and Asp142 each bind FMN. In terms of domain architecture, FAD-binding FR-type spans Gln215 to Pro502. FAD-binding positions include Arg400, Arg430–Ser433, and Gly474–Thr477. Residues Thr514, Ser574–Arg575, and Lys580–Gln584 contribute to the NADP(+) site. Trp657 is an FAD binding site.

The protein belongs to the NADPH-dependent diflavin oxidoreductase NDOR1 family. This sequence in the N-terminal section; belongs to the flavodoxin family. In the C-terminal section; belongs to the flavoprotein pyridine nucleotide cytochrome reductase family. In terms of assembly, interacts with DRE2; as part of the cytosolic iron-sulfur (Fe-S) protein assembly (CIA) machinery. Requires FAD as cofactor. It depends on FMN as a cofactor.

It is found in the cytoplasm. The protein localises to the mitochondrion. It catalyses the reaction 2 oxidized [2Fe-2S]-[protein] + NADPH = 2 reduced [2Fe-2S]-[protein] + NADP(+) + H(+). NADPH-dependent reductase which is a central component of the cytosolic iron-sulfur (Fe-S) protein assembly (CIA) machinery. Transfers electrons from NADPH via its FAD and FMN prosthetic groups to the [2Fe-2S] cluster of DRE2, another key component of the CIA machinery. In turn, this reduced cluster provides electrons for assembly of cytosolic iron-sulfur cluster proteins. Positively controls H(2)O(2)-induced cell death. This chain is NADPH-dependent diflavin oxidoreductase 1, found in Mycosarcoma maydis (Corn smut fungus).